Consider the following 460-residue polypeptide: Serine--tRNA ligase (460 aa).

255-257 provides a ligand contact to L-serine; sequence TAE. Residues 286-288 and Val302 contribute to the ATP site; that span reads RKE. Glu309 provides a ligand contact to L-serine. Residue 373-376 coordinates ATP; it reads EMVS. An L-serine-binding site is contributed by Thr409.

It belongs to the class-II aminoacyl-tRNA synthetase family. Type-1 seryl-tRNA synthetase subfamily. In terms of assembly, homodimer. The tRNA molecule binds across the dimer.

It localises to the cytoplasm. It catalyses the reaction tRNA(Ser) + L-serine + ATP = L-seryl-tRNA(Ser) + AMP + diphosphate + H(+). It carries out the reaction tRNA(Sec) + L-serine + ATP = L-seryl-tRNA(Sec) + AMP + diphosphate + H(+). Its pathway is aminoacyl-tRNA biosynthesis; selenocysteinyl-tRNA(Sec) biosynthesis; L-seryl-tRNA(Sec) from L-serine and tRNA(Sec): step 1/1. Catalyzes the attachment of serine to tRNA(Ser). Is also able to aminoacylate tRNA(Sec) with serine, to form the misacylated tRNA L-seryl-tRNA(Sec), which will be further converted into selenocysteinyl-tRNA(Sec). The chain is Serine--tRNA ligase from Hyperthermus butylicus (strain DSM 5456 / JCM 9403 / PLM1-5).